The chain runs to 478 residues: MAGVEEVAASGSHLNGDLDPDDREEGAASTAEEAAKKKRRKKKKSKGPSAAGEQEPDKESGASVDEVARQLERSALEDKERDEDDEDGDGDGDGATGKKKKKKKKKRGPKVQTDPPSVPICDLYPNGVFPKGQECEYPPTQDGRTAAWRTTSEEKKALDQASEEIWNDFREAAEAHRQVRKYVMSWIKPGMTMIEICEKLEDCSRKLIKENGLNAGLAFPTGCSLNNCAAHYTPNAGDTTVLQYDDICKIDFGTHISGRIIDCAFTVTFNPKYDTLLKAVKDATNTGIKCAGIDVRLCDVGEAIQEVMESYEVEIDGKTYQVKPIRNLNGHSIGQYRIHAGKTVPIVKGGEATRMEEGEVYAIETFGSTGKGVVHDDMECSHYMKNFDVGHVPIRLPRTKHLLNVINENFGTLAFCRRWLDRLGESKYLMALKNLCDLGIVDPYPPLCDIKGSYTAQFEHTILLRPTCKEVVSRGDDY.

The interval 1 to 122 (MAGVEEVAAS…TDPPSVPICD (122 aa)) is disordered. Alanine 2 is subject to N-acetylalanine. The span at 36–46 (KKKRRKKKKSK) shows a compositional bias: basic residues. Serine 45 is subject to Phosphoserine. Over residues 55-79 (EPDKESGASVDEVARQLERSALEDK) the composition is skewed to basic and acidic residues. Serine 60 and serine 63 each carry phosphoserine; alternate. Residues serine 60 and serine 63 are each glycosylated (O-linked (GlcNAc) serine; alternate). At serine 74 the chain carries Phosphoserine. Acidic residues predominate over residues 80-92 (ERDEDDEDGDGDG). Basic residues predominate over residues 97-109 (GKKKKKKKKKRGP). Histidine 231 contacts substrate. The a divalent metal cation site is built by aspartate 251, aspartate 262, and histidine 331. Histidine 339 provides a ligand contact to substrate. A divalent metal cation is bound by residues glutamate 364 and glutamate 459.

The protein belongs to the peptidase M24A family. Methionine aminopeptidase eukaryotic type 2 subfamily. Interacts strongly with the eIF-2 gamma-subunit EIF2S3. Binds EIF2S1 at low magnesium concentrations. It depends on Co(2+) as a cofactor. The cofactor is Zn(2+). Mn(2+) serves as cofactor. Fe(2+) is required as a cofactor. In terms of processing, contains approximately 12 O-linked N-acetylglucosamine (GlcNAc) residues. O-glycosylation is required for EIF2S1 binding.

Its subcellular location is the cytoplasm. It carries out the reaction Release of N-terminal amino acids, preferentially methionine, from peptides and arylamides.. Its function is as follows. Cotranslationally removes the N-terminal methionine from nascent proteins. The N-terminal methionine is often cleaved when the second residue in the primary sequence is small and uncharged (Met-Ala-, Cys, Gly, Pro, Ser, Thr, or Val). The catalytic activity of human METAP2 toward Met-Val peptides is consistently two orders of magnitude higher than that of METAP1, suggesting that it is responsible for processing proteins containing N-terminal Met-Val and Met-Thr sequences in vivo. Functionally, protects eukaryotic initiation factor EIF2S1 from translation-inhibiting phosphorylation by inhibitory kinases such as EIF2AK2/PKR and EIF2AK1/HCR. Plays a critical role in the regulation of protein synthesis. The polypeptide is Methionine aminopeptidase 2 (Homo sapiens (Human)).